The chain runs to 63 residues: Megourin-3 (63 aa).

Monomer. Post-translationally, contains four disulfide bonds.

The protein resides in the secreted. In terms of biological role, has antimicrobial activity against Gram-positive bacteria and fungi. This is Megourin-3 from Megoura viciae (Vetch aphid).